The sequence spans 225 residues: UPF0758 protein NGK_1225 (225 aa).

One can recognise an MPN domain in the interval 102–224 (TLSDPDTVAD…VRSFRQLGLM (123 aa)). Zn(2+) is bound by residues H173, H175, and D186. The JAMM motif signature appears at 173-186 (HNHPGGSPEPSQED).

It belongs to the UPF0758 family.

This chain is UPF0758 protein NGK_1225, found in Neisseria gonorrhoeae (strain NCCP11945).